Reading from the N-terminus, the 152-residue chain is Transcriptional repressor NrdR (152 aa).

A zinc finger spans residues 3–34; sequence CCYCGHGESKVLETRSAEEGRVIRRRRECMEC. The ATP-cone domain occupies 49-139; the sequence is LIVRKKGGSL…VYRQFTDVGR (91 aa).

It belongs to the NrdR family. The cofactor is Zn(2+).

In terms of biological role, negatively regulates transcription of bacterial ribonucleotide reductase nrd genes and operons by binding to NrdR-boxes. The protein is Transcriptional repressor NrdR of Heliobacterium modesticaldum (strain ATCC 51547 / Ice1).